The chain runs to 323 residues: Methenyltetrahydromethanopterin cyclohydrolase (323 aa).

The protein belongs to the MCH family.

The protein resides in the cytoplasm. The catalysed reaction is 5,10-methenyl-5,6,7,8-tetrahydromethanopterin + H2O = N(5)-formyl-5,6,7,8-tetrahydromethanopterin + H(+). It functions in the pathway one-carbon metabolism; methanogenesis from CO(2); 5,10-methenyl-5,6,7,8-tetrahydromethanopterin from CO(2): step 3/3. Its function is as follows. Catalyzes the reversible interconversion of 5-formyl-H(4)MPT to methenyl-H(4)MPT(+). The protein is Methenyltetrahydromethanopterin cyclohydrolase of Methanobrevibacter smithii (strain ATCC 35061 / DSM 861 / OCM 144 / PS).